Here is a 332-residue protein sequence, read N- to C-terminus: Glycerol-3-phosphate dehydrogenase [NAD(P)+] (332 aa).

Residues Ser-14, Trp-15, Arg-35, and Lys-107 each contribute to the NADPH site. Residues Lys-107, Gly-137, and Ser-139 each contribute to the sn-glycerol 3-phosphate site. Residue Ala-141 participates in NADPH binding. Residues Lys-192, Asp-245, Ser-255, Arg-256, and Asn-257 each contribute to the sn-glycerol 3-phosphate site. Catalysis depends on Lys-192, which acts as the Proton acceptor. Arg-256 contributes to the NADPH binding site. The NADPH site is built by Val-280 and Glu-282.

Belongs to the NAD-dependent glycerol-3-phosphate dehydrogenase family.

The protein resides in the cytoplasm. The catalysed reaction is sn-glycerol 3-phosphate + NAD(+) = dihydroxyacetone phosphate + NADH + H(+). It carries out the reaction sn-glycerol 3-phosphate + NADP(+) = dihydroxyacetone phosphate + NADPH + H(+). It functions in the pathway membrane lipid metabolism; glycerophospholipid metabolism. Its function is as follows. Catalyzes the reduction of the glycolytic intermediate dihydroxyacetone phosphate (DHAP) to sn-glycerol 3-phosphate (G3P), the key precursor for phospholipid synthesis. The chain is Glycerol-3-phosphate dehydrogenase [NAD(P)+] from Desulfovibrio desulfuricans (strain ATCC 27774 / DSM 6949 / MB).